Reading from the N-terminus, the 870-residue chain is DNA mismatch repair protein MutS (870 aa).

620-627 (GPNMAGKS) serves as a coordination point for ATP.

The protein belongs to the DNA mismatch repair MutS family.

In terms of biological role, this protein is involved in the repair of mismatches in DNA. It is possible that it carries out the mismatch recognition step. This protein has a weak ATPase activity. This Acetivibrio thermocellus (strain ATCC 27405 / DSM 1237 / JCM 9322 / NBRC 103400 / NCIMB 10682 / NRRL B-4536 / VPI 7372) (Clostridium thermocellum) protein is DNA mismatch repair protein MutS.